Consider the following 120-residue polypeptide: UPF0102 protein PTH_1707 (120 aa).

It belongs to the UPF0102 family.

This Pelotomaculum thermopropionicum (strain DSM 13744 / JCM 10971 / SI) protein is UPF0102 protein PTH_1707.